We begin with the raw amino-acid sequence, 333 residues long: T-cell surface glycoprotein CD1c (333 aa).

The signal sequence occupies residues 1-17 (MLFLQFLLLALLLPGGD). The Extracellular segment spans residues 18 to 302 (NADASQEHVS…ILYWGHHFSM (285 aa)). 4 N-linked (GlcNAc...) asparagine glycosylation sites follow: Asn38, Asn70, Asn75, and Asn146. Disulfide bonds link Cys120–Cys185 and Cys225–Cys280. The region spanning 206–296 (PEAWLSSRPS…LGGQDIILYW (91 aa)) is the Ig-like domain. The chain crosses the membrane as a helical span at residues 303–323 (NWIALVVIVPLVILIVLVLWF). At 324-333 (KKHCSYQDIL) the chain is on the cytoplasmic side. The Internalization signal signature appears at 329–332 (YQDI).

In terms of assembly, heterodimer with B2M (beta-2-microglobulin). In terms of tissue distribution, expressed on cortical thymocytes, on certain T-cell leukemias, and in various other tissues.

The protein resides in the cell membrane. It is found in the endosome membrane. It localises to the lysosome. Its function is as follows. Antigen-presenting protein that binds self and non-self lipid and glycolipid antigens and presents them to T-cell receptors on natural killer T-cells. The polypeptide is T-cell surface glycoprotein CD1c (CD1C) (Homo sapiens (Human)).